Reading from the N-terminus, the 246-residue chain is uncharacterized protein (246 aa).

This is an uncharacterized protein from Borreliella burgdorferi (strain ATCC 35210 / DSM 4680 / CIP 102532 / B31) (Borrelia burgdorferi).